A 403-amino-acid chain; its full sequence is Argininosuccinate synthase (403 aa).

10–18 (AYSGGLDTS) is a binding site for ATP. L-citrulline-binding residues include Y88 and S93. G118 contacts ATP. L-aspartate contacts are provided by T120, N124, and D125. N124 contributes to the L-citrulline binding site. R128, S177, S186, E263, and Y275 together coordinate L-citrulline.

Belongs to the argininosuccinate synthase family. Type 1 subfamily. In terms of assembly, homotetramer.

The protein localises to the cytoplasm. It carries out the reaction L-citrulline + L-aspartate + ATP = 2-(N(omega)-L-arginino)succinate + AMP + diphosphate + H(+). It functions in the pathway amino-acid biosynthesis; L-arginine biosynthesis; L-arginine from L-ornithine and carbamoyl phosphate: step 2/3. This Clostridium perfringens (strain ATCC 13124 / DSM 756 / JCM 1290 / NCIMB 6125 / NCTC 8237 / Type A) protein is Argininosuccinate synthase.